Consider the following 265-residue polypeptide: GTP cyclohydrolase FolE2 (265 aa).

It belongs to the GTP cyclohydrolase IV family.

The catalysed reaction is GTP + H2O = 7,8-dihydroneopterin 3'-triphosphate + formate + H(+). Its pathway is cofactor biosynthesis; 7,8-dihydroneopterin triphosphate biosynthesis; 7,8-dihydroneopterin triphosphate from GTP: step 1/1. Converts GTP to 7,8-dihydroneopterin triphosphate. In Bordetella avium (strain 197N), this protein is GTP cyclohydrolase FolE2.